Reading from the N-terminus, the 763-residue chain is Xaa-Pro dipeptidyl-peptidase (763 aa).

Active-site charge relay system residues include serine 348, aspartate 468, and histidine 498.

It belongs to the peptidase S15 family. Homodimer.

It localises to the cytoplasm. It carries out the reaction Hydrolyzes Xaa-Pro-|- bonds to release unblocked, N-terminal dipeptides from substrates including Ala-Pro-|-p-nitroanilide and (sequentially) Tyr-Pro-|-Phe-Pro-|-Gly-Pro-|-Ile.. Removes N-terminal dipeptides sequentially from polypeptides having unsubstituted N-termini provided that the penultimate residue is proline. This Lactococcus lactis subsp. cremoris (strain SK11) protein is Xaa-Pro dipeptidyl-peptidase.